The sequence spans 124 residues: Large ribosomal subunit protein bL36m (124 aa).

This sequence belongs to the bacterial ribosomal protein bL36 family. As to quaternary structure, component of the mitochondrial large ribosomal subunit (mt-LSU). Mature N.crassa 74S mitochondrial ribosomes consist of a small (37S) and a large (54S) subunit. The 37S small subunit contains a 16S ribosomal RNA (16S mt-rRNA) and 32 different proteins. The 54S large subunit contains a 23S rRNA (23S mt-rRNA) and 42 different proteins. bL36m has a zinc binding site.

Its subcellular location is the mitochondrion. Functionally, component of the mitochondrial ribosome (mitoribosome), a dedicated translation machinery responsible for the synthesis of mitochondrial genome-encoded proteins, including at least some of the essential transmembrane subunits of the mitochondrial respiratory chain. The mitoribosomes are attached to the mitochondrial inner membrane and translation products are cotranslationally integrated into the membrane. This chain is Large ribosomal subunit protein bL36m (rtc6), found in Neurospora crassa (strain ATCC 24698 / 74-OR23-1A / CBS 708.71 / DSM 1257 / FGSC 987).